Consider the following 376-residue polypeptide: UDP-N-acetylenolpyruvoylglucosamine reductase (376 aa).

In terms of domain architecture, FAD-binding PCMH-type spans 48–219 (VGGPARHLVI…LDVTMQFNLG (172 aa)). Arg-196 is a catalytic residue. Catalysis depends on Ser-274, which acts as the Proton donor. The active site involves Glu-368.

It belongs to the MurB family. FAD serves as cofactor.

It is found in the cytoplasm. It carries out the reaction UDP-N-acetyl-alpha-D-muramate + NADP(+) = UDP-N-acetyl-3-O-(1-carboxyvinyl)-alpha-D-glucosamine + NADPH + H(+). The protein operates within cell wall biogenesis; peptidoglycan biosynthesis. Cell wall formation. The sequence is that of UDP-N-acetylenolpyruvoylglucosamine reductase from Cutibacterium acnes (strain DSM 16379 / KPA171202) (Propionibacterium acnes).